Here is a 155-residue protein sequence, read N- to C-terminus: SsrA-binding protein (155 aa).

The segment at 136–155 (RESLKRRQDQRDMQRAMKNY) is disordered.

It belongs to the SmpB family.

The protein resides in the cytoplasm. Its function is as follows. Required for rescue of stalled ribosomes mediated by trans-translation. Binds to transfer-messenger RNA (tmRNA), required for stable association of tmRNA with ribosomes. tmRNA and SmpB together mimic tRNA shape, replacing the anticodon stem-loop with SmpB. tmRNA is encoded by the ssrA gene; the 2 termini fold to resemble tRNA(Ala) and it encodes a 'tag peptide', a short internal open reading frame. During trans-translation Ala-aminoacylated tmRNA acts like a tRNA, entering the A-site of stalled ribosomes, displacing the stalled mRNA. The ribosome then switches to translate the ORF on the tmRNA; the nascent peptide is terminated with the 'tag peptide' encoded by the tmRNA and targeted for degradation. The ribosome is freed to recommence translation, which seems to be the essential function of trans-translation. The sequence is that of SsrA-binding protein from Nostoc sp. (strain PCC 7120 / SAG 25.82 / UTEX 2576).